Here is a 257-residue protein sequence, read N- to C-terminus: Golgi SNAP receptor complex member 1-2 (257 aa).

The Cytoplasmic portion of the chain corresponds to 1–235; the sequence is MTESSLDLQE…GSIKRKRSRD (235 aa). The residue at position 51 (Asn51) is a Phosphoserine. Residues 113–147 are a coiled coil; the sequence is TQKLARHRDILHEYTQEFRRIKGNINSLREHAELL. A helical; Anchor for type IV membrane protein transmembrane segment spans residues 236-256; it reads TLILSAVIAACTLFLIIYWLS. Position 257 (Lys257) is a topological domain, vesicular.

This sequence belongs to the GOSR1 family. Component of several multiprotein Golgi SNARE complexes.

The protein localises to the golgi apparatus membrane. It is found in the endoplasmic reticulum membrane. Its function is as follows. Involved in transport from the ER to the Golgi apparatus as well as in intra-Golgi transport. It belongs to a super-family of proteins called t-SNAREs or soluble NSF (N-ethylmaleimide-sensitive factor) attachment protein receptor. The protein is Golgi SNAP receptor complex member 1-2 (GOS12) of Arabidopsis thaliana (Mouse-ear cress).